The primary structure comprises 151 residues: Large ribosomal subunit protein bL9 (151 aa).

This sequence belongs to the bacterial ribosomal protein bL9 family.

Its function is as follows. Binds to the 23S rRNA. In Lactobacillus johnsonii (strain CNCM I-12250 / La1 / NCC 533), this protein is Large ribosomal subunit protein bL9.